The following is a 182-amino-acid chain: Type-1 fimbrial protein, A chain (182 aa).

Residues 1–23 form the signal peptide; it reads MKIKTLAIVVLSALSLSSTAALA. Cys44 and Cys84 are disulfide-bonded.

The protein belongs to the fimbrial protein family.

It is found in the fimbrium. Functionally, fimbriae (also called pili), polar filaments radiating from the surface of the bacterium to a length of 0.5-1.5 micrometers and numbering 100-300 per cell, enable bacteria to colonize the epithelium of specific host organs. This is Type-1 fimbrial protein, A chain (fimA) from Escherichia coli (strain K12).